The chain runs to 416 residues: Na(+)/H(+) antiporter NhaA (416 aa).

Transmembrane regions (helical) follow at residues 39 to 59 (GIVLLIAAAAALAWANSPWAA), 82 to 102 (LHFWVNDALMTVFFLVVGLEI), 119 to 139 (LPVLAALGGVAVPALLYLALV), 146 to 166 (GWAVPTATDIAFAVGVLALLG), 175 to 195 (VFLLTLAIIDDLVAVLIIALF), 198 to 218 (GGLQWPMFGIAALGLAGVLLL), 234 to 254 (AVLWWGIWQTGAHPTLAGVVL), 281 to 301 (PWVTFGVMPLFALANAGVALG), 315 to 335 (LLMAAVAVALVAGKPLGVLLA), 353 to 373 (WGGLLLTGLLAGIGFTMAIFI), and 390 to 410 (GVLLASGLAALLGLAWGWWLQ).

This sequence belongs to the NhaA Na(+)/H(+) (TC 2.A.33) antiporter family.

It localises to the cell inner membrane. It catalyses the reaction Na(+)(in) + 2 H(+)(out) = Na(+)(out) + 2 H(+)(in). Its function is as follows. Na(+)/H(+) antiporter that extrudes sodium in exchange for external protons. The protein is Na(+)/H(+) antiporter NhaA of Acidovorax sp. (strain JS42).